Reading from the N-terminus, the 309-residue chain is RING finger protein mug145 (309 aa).

Residues Ile-23–Tyr-43 traverse the membrane as a helical segment. Residues Cys-205–Asn-247 form an RING-type; atypical zinc finger.

The protein localises to the membrane. Functionally, has a role in meiosis. The protein is RING finger protein mug145 (mug145) of Schizosaccharomyces pombe (strain 972 / ATCC 24843) (Fission yeast).